The chain runs to 566 residues: APC membrane recruitment protein 2 (566 aa).

Disordered stretches follow at residues 120–176, 192–237, 277–307, and 342–533; these read KKNG…PGLI, TQKP…SPCS, VTGC…GKKV, and MIPP…RTKI. Basic and acidic residues-rich tracts occupy residues 123–134, 155–168, and 192–204; these read GKSENVRGEQAE, SKKD…KEGA, and TQKP…KSTE. Basic and acidic residues-rich tracts occupy residues 364 to 377 and 389 to 411; these read REVK…DRNA and YRKE…RNSD. Residues 464–476 are compositionally biased toward low complexity; sequence PPLSHSHSKPLSP. 2 stretches are compositionally biased toward polar residues: residues 477-489 and 504-517; these read VTTS…ASSN and HTTN…SGSA.

Belongs to the Amer family.

The protein localises to the cell membrane. Functionally, negative regulator of the canonical Wnt signaling pathway involved in neuroectodermal patterning. Acts by specifically binding phosphatidylinositol 4,5-bisphosphate (PtdIns(4,5)P2), translocating to the cell membrane and interacting with key regulators of the canonical Wnt signaling pathway, such as components of the beta-catenin destruction complex. This chain is APC membrane recruitment protein 2 (amer2), found in Xenopus tropicalis (Western clawed frog).